The sequence spans 973 residues: Serine/threonine-protein kinase atg1 (973 aa).

Positions 23 to 328 (YTRLDEIGRG…FPDFFQNGVI (306 aa)) constitute a Protein kinase domain. ATP-binding positions include 29-37 (IGRGSFATV) and K52. D166 acts as the Proton acceptor in catalysis. Disordered regions lie at residues 338 to 446 (DDLP…PGRQ), 460 to 482 (RQKGRNTFSEGSPQIDRQADKLR), 523 to 587 (GNIS…QSPT), and 949 to 973 (PTPSANVPSKMASSNPVSVGATPPK). Positions 387–407 (GLTQRPPSQNQRFGTPQTTTP) are enriched in polar residues. Over residues 523–537 (GNISRGAQTGALSRR) the composition is skewed to polar residues. Positions 566-582 (SRADSMHNRQGSYERRY) are enriched in basic and acidic residues. Polar residues predominate over residues 951–965 (PSANVPSKMASSNPV).

The protein belongs to the protein kinase superfamily. Ser/Thr protein kinase family. APG1/unc-51/ULK1 subfamily. In terms of assembly, homodimer. Forms a ternary complex with ATG13 and ATG17.

The protein resides in the cytoplasm. The protein localises to the preautophagosomal structure membrane. It catalyses the reaction L-seryl-[protein] + ATP = O-phospho-L-seryl-[protein] + ADP + H(+). The enzyme catalyses L-threonyl-[protein] + ATP = O-phospho-L-threonyl-[protein] + ADP + H(+). Functionally, serine/threonine protein kinase involved in the cytoplasm to vacuole transport (Cvt) and found to be essential in autophagy, where it is required for the formation of autophagosomes. Involved in the clearance of protein aggregates which cannot be efficiently cleared by the proteasome. Required for selective autophagic degradation of the nucleus (nucleophagy) as well as for mitophagy which contributes to regulate mitochondrial quantity and quality by eliminating the mitochondria to a basal level to fulfill cellular energy requirements and preventing excess ROS production. Also involved in endoplasmic reticulum-specific autophagic process, in selective removal of ER-associated degradation (ERAD) substrates. Plays a key role in ATG9 and ATG23 cycling through the pre-autophagosomal structure and is necessary to promote ATG18 binding to ATG9 through phosphorylation of ATG9. Catalyzes phosphorylation of ATG4, decreasing the interaction between ATG4 and ATG8 and impairing deconjugation of PE-conjugated forms of ATG8. The protein is Serine/threonine-protein kinase atg1 of Aspergillus fumigatus (strain ATCC MYA-4609 / CBS 101355 / FGSC A1100 / Af293) (Neosartorya fumigata).